Here is a 371-residue protein sequence, read N- to C-terminus: GDP-mannose 3,5-epimerase 2 (371 aa).

Residues Gly-29–Lys-55, Asp-53, and Asp-73 each bind NAD(+). Substrate is bound by residues Gly-98 and Ser-138 to Cys-140. Positions 168 and 172 each coordinate NAD(+). The active-site Proton acceptor is the Tyr-168. Substrate contacts are provided by residues Asn-197, Glu-210–Ala-212, Lys-219, Gln-235–Arg-237, Arg-300, and Ser-350.

Belongs to the NAD(P)-dependent epimerase/dehydratase family. Requires NAD(+) as cofactor.

The enzyme catalyses GDP-alpha-D-mannose = GDP-beta-L-gulose. The catalysed reaction is GDP-beta-L-gulose = GDP-beta-L-galactose. The protein operates within cofactor biosynthesis; L-ascorbate biosynthesis via GDP-alpha-D-mannose pathway; L-ascorbate from GDP-alpha-D-mannose: step 1/5. Its function is as follows. Catalyzes a reversible epimerization of GDP-D-mannose that precedes the committed step in the biosynthesis of vitamin C (L-ascorbate), resulting in the hydrolysis of the highly energetic glycosyl-pyrophosphoryl linkage. Able to catalyze 2 distinct epimerization reactions and can release both GDP-L-galactose and GDP-L-gulose from GDP-mannose. This chain is GDP-mannose 3,5-epimerase 2 (GME-2), found in Oryza sativa subsp. japonica (Rice).